The primary structure comprises 209 residues: Uracil phosphoribosyltransferase (209 aa).

5-phospho-alpha-D-ribose 1-diphosphate is bound by residues Arg79, Arg104, and 131–139 (DPMLATGNS). Residues Ile194 and 199–201 (GDA) contribute to the uracil site. 5-phospho-alpha-D-ribose 1-diphosphate is bound at residue Asp200.

This sequence belongs to the UPRTase family. It depends on Mg(2+) as a cofactor.

The enzyme catalyses UMP + diphosphate = 5-phospho-alpha-D-ribose 1-diphosphate + uracil. It functions in the pathway pyrimidine metabolism; UMP biosynthesis via salvage pathway; UMP from uracil: step 1/1. Its activity is regulated as follows. Allosterically activated by GTP. Its function is as follows. Catalyzes the conversion of uracil and 5-phospho-alpha-D-ribose 1-diphosphate (PRPP) to UMP and diphosphate. The protein is Uracil phosphoribosyltransferase of Rhizobium etli (strain CIAT 652).